The chain runs to 462 residues: Cysteine--tRNA ligase (462 aa).

Cys28 provides a ligand contact to Zn(2+). The short motif at 30–40 (VTAYDLCHIGH) is the 'HIGH' region element. Residues Cys209, His234, and Glu238 each coordinate Zn(2+). Positions 266-270 (KMSKS) match the 'KMSKS' region motif. Lys269 provides a ligand contact to ATP.

It belongs to the class-I aminoacyl-tRNA synthetase family. In terms of assembly, monomer. Zn(2+) is required as a cofactor.

It is found in the cytoplasm. It catalyses the reaction tRNA(Cys) + L-cysteine + ATP = L-cysteinyl-tRNA(Cys) + AMP + diphosphate. The protein is Cysteine--tRNA ligase of Baumannia cicadellinicola subsp. Homalodisca coagulata.